A 501-amino-acid chain; its full sequence is U6 snRNA (guanine-N(2))-methyltransferase THUMPD2 (501 aa).

The region spanning 149-264 (TEQIQELQET…DVYSVLGIPV (116 aa)) is the THUMP domain. Residues 414 to 469 (LKGGEASSGPLNSQGGHTEEPGGEERLTPAEKAAVSEPVSSPFAASNQGRLDRMPP) form a disordered region. A compositionally biased stretch (basic and acidic residues) spans 430 to 442 (HTEEPGGEERLTP).

This sequence belongs to the methyltransferase superfamily. As to quaternary structure, part of the heterodimeric THUMPD2-TRM112 methyltransferase complex; this complex forms an active tRNA methyltransferase, where TRMT112 acts as an activator of the catalytic subunit THUMPD2.

Its subcellular location is the nucleus. The enzyme catalyses guanosine in U6 snRNA + S-adenosyl-L-methionine = N(2)-methylguanosine in U6 snRNA + S-adenosyl-L-homocysteine + H(+). Catalytic subunit of the THUMPD2-TRM112 methyltransferase complex, that specifically mediates the S-adenosyl-L-methionine-dependent N(2)-methylation of guanosine nucleotides, most probably at position 72 (m2G72), in the U6snRNA of the major spliceosome. This modification in the U6 snRNA affects the constitutive splicing efficiency of introns that have suboptimal splice sites and can impact final mRNA levels. The sequence is that of U6 snRNA (guanine-N(2))-methyltransferase THUMPD2 from Bos taurus (Bovine).